A 460-amino-acid chain; its full sequence is Protein king tubby (460 aa).

Disordered stretches follow at residues 75-97 (NGSPGGINPVAMNTSRNHSNNMR) and 115-208 (HELE…EGDV). The span at 85–97 (AMNTSRNHSNNMR) shows a compositional bias: polar residues. Low complexity predominate over residues 130–145 (QHQQSASHSANSTQSQ). Phosphoserine is present on Ser-153. Positions 194 to 203 (NGTGNGTGGE) are enriched in gly residues.

The protein belongs to the TUB family. As to expression, detected in sensory neurons which have a ciliary structure such as the chordotonal neurons, Orco-expressing olfactory receptor neurons, labellar gustatory receptor neurons and in the femoral chordotonal organ (at protein level). In the chordotonal neurons of the Johnston's organ expressed in the proximal to distal cilia, with lower levels of expression in the distal portion (at protein level). Also detected in the salivary glands and antenna (at protein level). Expressed in photoreceptor cells (at protein level). At stage 9 expression is detected in a subset of neuroblasts. By stage 12 expression is found in both the CNS and PNS. In late-stage embryos, expression persists in the CNS and PNS with more abundant expression in the antennal-maxillary sensory neurons and in bilateral groups of cells in the brain.

The protein resides in the cytoplasm. It is found in the nucleus. Its subcellular location is the cell projection. The protein localises to the cilium membrane. It localises to the rhabdomere. Its function is as follows. Functions in regulating protein trafficking, retinal maintenance and lipid storage. Protects photoreceptor cells R1 to R6 against light-induced retinal degeneration by stimulating norpA-mediated endocytosis of the rhodopsin ninaE (Rh1). In the auditory receptor neurons, functions as a cilia trafficking regulator of various transient receptor potential (TRP) channel components including iav and nompC. Likely to deliver pre-ciliary vesicles containing membrane proteins such as iav and nompC to the intraflagellar transport complex (IFT) at the cilia base. Plays a role in the inhibition of fat storage. The polypeptide is Protein king tubby (ktub) (Drosophila melanogaster (Fruit fly)).